Consider the following 897-residue polypeptide: High molecular weight rhoptry protein 3 (897 aa).

An N-terminal signal peptide occupies residues Met-1 to Gly-24. Cystine bridges form between Cys-157–Cys-231, Cys-244–Cys-253, Cys-262–Cys-276, Cys-421–Cys-620, and Cys-475–Cys-536. A helical transmembrane segment spans residues Phe-597–Tyr-615. Disordered regions lie at residues Lys-788–Lys-845 and Gln-859–Leu-897. Positions Lys-792 to Asp-801 are enriched in polar residues. Residues Glu-802–Gly-817 show a composition bias toward low complexity. Residue Ser-804 is modified to Phosphoserine. Residues Gly-820–Met-832 are compositionally biased toward basic and acidic residues. Basic residues predominate over residues Pro-865 to Arg-876. Positions Asp-877–Lys-889 are enriched in basic and acidic residues.

In terms of assembly, component of the RhopH complex, composed of CLAG3.1/CLAG3.2, RhopH2 and RhopH3 with a 1:1:1 subunit stoichiometry. Interacts with CLAG3.1/CLAG3.2. Interacts with CDPK1; the interaction promotes RhopH3 phosphorylation in merozoites. Post-translationally, proteolytically cleaved near C-terminus.

The protein resides in the host cell membrane. Its subcellular location is the parasitophorous vacuole membrane. It localises to the cytoplasmic vesicle. It is found in the secretory vesicle. The protein localises to the rhoptry. Functionally, participates in the formation of new permeability pathways in Plasmodium-infected erythrocytes enabling the uptake of nutrients from the blood plasma. Required for maintaining invasion capacity of merozoites. Required for the trophozoite to schizont developmental transition of the intracellular parasite. The protein is High molecular weight rhoptry protein 3 of Plasmodium falciparum.